The primary structure comprises 546 residues: NADH-ubiquinone oxidoreductase chain 5 (546 aa).

Transmembrane regions (helical) follow at residues 1–21 (MFLL…SPIA), 31–51 (IIAI…YYEV), 52–72 (VFMG…VGTF), 82–102 (LLTA…HMYA), 112–132 (LNLF…LVAA), 135–155 (LLVM…LIGY), 175–195 (VSDG…GSLE), 198–218 (LLNV…GAMG), 237–257 (TPVS…YLLV), 264–284 (EMFV…FGAT), 291–310 (VIAY…LGLG), 321–341 (LMTH…VISG), 358–378 (AMFT…WPEL), 387–407 (ILNL…TLLL), 440–460 (VLPI…VWVG), and 468–488 (LFFL…AGIL).

The protein belongs to the complex I subunit 5 family.

The protein resides in the mitochondrion inner membrane. It carries out the reaction a ubiquinone + NADH + 5 H(+)(in) = a ubiquinol + NAD(+) + 4 H(+)(out). In terms of biological role, core subunit of the mitochondrial membrane respiratory chain NADH dehydrogenase (Complex I) that is believed to belong to the minimal assembly required for catalysis. Complex I functions in the transfer of electrons from NADH to the respiratory chain. The immediate electron acceptor for the enzyme is believed to be ubiquinone. This Chlamydomonas reinhardtii (Chlamydomonas smithii) protein is NADH-ubiquinone oxidoreductase chain 5 (ND5).